The chain runs to 180 residues: Pyruvate synthase subunit PorC (180 aa).

In terms of assembly, heterotetramer of one alpha, one beta, one delta and one gamma chain.

The enzyme catalyses 2 oxidized [2Fe-2S]-[ferredoxin] + pyruvate + CoA = 2 reduced [2Fe-2S]-[ferredoxin] + acetyl-CoA + CO2 + H(+). The protein is Pyruvate synthase subunit PorC (porC) of Methanothermobacter thermautotrophicus (strain ATCC 29096 / DSM 1053 / JCM 10044 / NBRC 100330 / Delta H) (Methanobacterium thermoautotrophicum).